The chain runs to 227 residues: MKFAVIQFPGSNCDLDMLHAIRDSLGEEAEYVWHAETSLAGFDAVLLPGGFSYGDYLRTGAIAKFSSIMPEVLRFAEMGKPVLGVCNGFQILTEIGLLPGALIRNNNLHFICKTVPLRVANASTMFTGLYKEGEIIQVPVAHGEGNYYCDDETLLKLKDNNQIVFTYDSVNPNGSRADIAGIVNERGNVLGMMPHPERAVEEIIGGTDGLRLFESVVKAWKEEQVNA.

The 225-residue stretch at 2–226 folds into the Glutamine amidotransferase type-1 domain; the sequence is KFAVIQFPGS…VKAWKEEQVN (225 aa). The active-site Nucleophile is Cys86. Active-site residues include His195 and Glu197.

As to quaternary structure, part of the FGAM synthase complex composed of 1 PurL, 1 PurQ and 2 PurS subunits.

Its subcellular location is the cytoplasm. It carries out the reaction N(2)-formyl-N(1)-(5-phospho-beta-D-ribosyl)glycinamide + L-glutamine + ATP + H2O = 2-formamido-N(1)-(5-O-phospho-beta-D-ribosyl)acetamidine + L-glutamate + ADP + phosphate + H(+). The catalysed reaction is L-glutamine + H2O = L-glutamate + NH4(+). The protein operates within purine metabolism; IMP biosynthesis via de novo pathway; 5-amino-1-(5-phospho-D-ribosyl)imidazole from N(2)-formyl-N(1)-(5-phospho-D-ribosyl)glycinamide: step 1/2. Functionally, part of the phosphoribosylformylglycinamidine synthase complex involved in the purines biosynthetic pathway. Catalyzes the ATP-dependent conversion of formylglycinamide ribonucleotide (FGAR) and glutamine to yield formylglycinamidine ribonucleotide (FGAM) and glutamate. The FGAM synthase complex is composed of three subunits. PurQ produces an ammonia molecule by converting glutamine to glutamate. PurL transfers the ammonia molecule to FGAR to form FGAM in an ATP-dependent manner. PurS interacts with PurQ and PurL and is thought to assist in the transfer of the ammonia molecule from PurQ to PurL. In Listeria monocytogenes serotype 4b (strain CLIP80459), this protein is Phosphoribosylformylglycinamidine synthase subunit PurQ.